Here is a 154-residue protein sequence, read N- to C-terminus: Phosphopantetheine adenylyltransferase (154 aa).

Position 10 (Thr-10) interacts with substrate. Residues 10-11 (TF) and His-18 contribute to the ATP site. The substrate site is built by Lys-42, Leu-74, and Arg-88. ATP is bound by residues 89-91 (GLR), Glu-99, and 124-130 (NAFISSS).

The protein belongs to the bacterial CoaD family. As to quaternary structure, homohexamer. It depends on Mg(2+) as a cofactor.

The protein resides in the cytoplasm. It catalyses the reaction (R)-4'-phosphopantetheine + ATP + H(+) = 3'-dephospho-CoA + diphosphate. It participates in cofactor biosynthesis; coenzyme A biosynthesis; CoA from (R)-pantothenate: step 4/5. In terms of biological role, reversibly transfers an adenylyl group from ATP to 4'-phosphopantetheine, yielding dephospho-CoA (dPCoA) and pyrophosphate. This chain is Phosphopantetheine adenylyltransferase, found in Nautilia profundicola (strain ATCC BAA-1463 / DSM 18972 / AmH).